Consider the following 700-residue polypeptide: Receptor-type tyrosine-protein phosphatase epsilon (700 aa).

Positions 1 to 19 are cleaved as a signal peptide; sequence MEPLCPLLLVGFSLPLARA. The Extracellular portion of the chain corresponds to 20-46; sequence LRGNETTADSNETTTTSGPPDPGASQP. 2 N-linked (GlcNAc...) asparagine glycosylation sites follow: Asn23 and Asn30. The helical transmembrane segment at 47 to 69 threads the bilayer; the sequence is LLAWLLLPLLLLLLVLLLAAYFF. Residues 70 to 700 lie on the Cytoplasmic side of the membrane; that stretch reads RFRKQRKAVV…DIFSDYANFK (631 aa). 2 Tyrosine-protein phosphatase domains span residues 135-394 and 426-689; these read FREE…LLEY and LEEE…VQDF. Substrate contacts are provided by residues Asp303, 335 to 341, and Gln379; that span reads CSAGVGR. Cys335 serves as the catalytic Phosphocysteine intermediate. Cys630 serves as the catalytic Phosphocysteine intermediate. A Phosphotyrosine modification is found at Tyr696.

The protein belongs to the protein-tyrosine phosphatase family. Receptor class 4 subfamily. As to quaternary structure, monomer. Isoform 2: Homodimer. Can form oligomers. Dimerization is increased by oxidative stress and decreased by EGFR. Isoform 2 interacts with GRB2. In terms of processing, a catalytically active cytoplasmic form (p65) is produced by proteolytic cleavage of either isoform 1, isoform 2 or isoform 3. Post-translationally, isoform 1 and isoform 2 are phosphorylated on tyrosine residues by tyrosine kinase Neu. Isoform 1 is glycosylated. Expressed in giant cell tumor (osteoclastoma rich in multinucleated osteoclastic cells).

It is found in the cell membrane. The protein resides in the cytoplasm. It catalyses the reaction O-phospho-L-tyrosyl-[protein] + H2O = L-tyrosyl-[protein] + phosphate. In terms of biological role, isoform 1 plays a critical role in signaling transduction pathways and phosphoprotein network topology in red blood cells. May play a role in osteoclast formation and function. Its function is as follows. Isoform 2 acts as a negative regulator of insulin receptor (IR) signaling in skeletal muscle. Regulates insulin-induced tyrosine phosphorylation of insulin receptor (IR) and insulin receptor substrate 1 (IRS-1), phosphorylation of protein kinase B and glycogen synthase kinase-3 and insulin induced stimulation of glucose uptake. Isoform 1 and isoform 2 act as a negative regulator of FceRI-mediated signal transduction leading to cytokine production and degranulation, most likely by acting at the level of SYK to affect downstream events such as phosphorylation of SLP76 and LAT and mobilization of Ca(2+). This chain is Receptor-type tyrosine-protein phosphatase epsilon (PTPRE), found in Homo sapiens (Human).